Reading from the N-terminus, the 131-residue chain is Global transcriptional regulator Spx (131 aa).

An intrachain disulfide couples cysteine 10 to cysteine 13.

Belongs to the ArsC family. Spx subfamily. As to quaternary structure, interacts with the C-terminal domain of the alpha subunit of the RNAP.

Its subcellular location is the cytoplasm. Global transcriptional regulator that plays a key role in stress response and exerts either positive or negative regulation of genes. Acts by interacting with the C-terminal domain of the alpha subunit of the RNA polymerase (RNAP). This interaction can enhance binding of RNAP to the promoter region of target genes and stimulate their transcription, or block interaction of RNAP with activator. The sequence is that of Global transcriptional regulator Spx from Staphylococcus saprophyticus subsp. saprophyticus (strain ATCC 15305 / DSM 20229 / NCIMB 8711 / NCTC 7292 / S-41).